A 363-amino-acid chain; its full sequence is UDP-3-O-acylglucosamine N-acyltransferase (363 aa).

Residue His-266 is the Proton acceptor of the active site.

It belongs to the transferase hexapeptide repeat family. LpxD subfamily. In terms of assembly, homotrimer.

The catalysed reaction is a UDP-3-O-[(3R)-3-hydroxyacyl]-alpha-D-glucosamine + a (3R)-hydroxyacyl-[ACP] = a UDP-2-N,3-O-bis[(3R)-3-hydroxyacyl]-alpha-D-glucosamine + holo-[ACP] + H(+). It participates in bacterial outer membrane biogenesis; LPS lipid A biosynthesis. Functionally, catalyzes the N-acylation of UDP-3-O-acylglucosamine using 3-hydroxyacyl-ACP as the acyl donor. Is involved in the biosynthesis of lipid A, a phosphorylated glycolipid that anchors the lipopolysaccharide to the outer membrane of the cell. In Bordetella parapertussis (strain 12822 / ATCC BAA-587 / NCTC 13253), this protein is UDP-3-O-acylglucosamine N-acyltransferase.